A 393-amino-acid chain; its full sequence is BEN domain-containing protein 5 (393 aa).

The stretch at 169-212 (RVLYEELLRSYQQQQQEMKHIQHELERTRKQLVQQAKKLKDYGS) forms a coiled coil. Residues 274–380 (GSGVWVNEEK…EKIMDINKSC (107 aa)) form the BEN domain.

In terms of biological role, may act as a transcriptional repressor. The polypeptide is BEN domain-containing protein 5 (bend5) (Xenopus laevis (African clawed frog)).